We begin with the raw amino-acid sequence, 522 residues long: Maturase K (522 aa).

It belongs to the intron maturase 2 family. MatK subfamily.

It localises to the plastid. It is found in the chloroplast. In terms of biological role, usually encoded in the trnK tRNA gene intron. Probably assists in splicing its own and other chloroplast group II introns. The chain is Maturase K from Pillansia templemannii.